A 91-amino-acid polypeptide reads, in one-letter code: Small ribosomal subunit protein uS15c (91 aa).

This sequence belongs to the universal ribosomal protein uS15 family. In terms of assembly, part of the 30S ribosomal subunit.

It is found in the plastid. It localises to the chloroplast. The chain is Small ribosomal subunit protein uS15c (rps15) from Cicer arietinum (Chickpea).